A 209-amino-acid polypeptide reads, in one-letter code: NAD(P)H-quinone oxidoreductase subunit N, chloroplastic (209 aa).

The transit peptide at 1 to 45 (MGSRAICIQRVAPPCFEASQVKKIKTVGSFLVNTRSKRRRSTGVK) directs the protein to the chloroplast.

This sequence belongs to the NDH complex subunit N family. As to quaternary structure, part of the chloroplast NDH complex, composed of a mixture of chloroplast and nucleus encoded subunits. Component of the NDH subcomplex A, at least composed of ndhH, ndhI, ndhJ, ndhK, ndhL, ndhM, ndhN and ndhO.

Its subcellular location is the plastid. It localises to the chloroplast thylakoid membrane. It catalyses the reaction a plastoquinone + NADH + (n+1) H(+)(in) = a plastoquinol + NAD(+) + n H(+)(out). The catalysed reaction is a plastoquinone + NADPH + (n+1) H(+)(in) = a plastoquinol + NADP(+) + n H(+)(out). NDH shuttles electrons from NAD(P)H:plastoquinone, via FMN and iron-sulfur (Fe-S) centers, to quinones in the photosynthetic chain and possibly in a chloroplast respiratory chain. The immediate electron acceptor for the enzyme in this species is believed to be plastoquinone. Couples the redox reaction to proton translocation, and thus conserves the redox energy in a proton gradient. This chain is NAD(P)H-quinone oxidoreductase subunit N, chloroplastic, found in Arabidopsis thaliana (Mouse-ear cress).